A 213-amino-acid chain; its full sequence is Pyrrolidone-carboxylate peptidase (213 aa).

Catalysis depends on residues glutamate 80, cysteine 143, and histidine 165.

This sequence belongs to the peptidase C15 family. In terms of assembly, homotetramer.

The protein resides in the cytoplasm. The catalysed reaction is Release of an N-terminal pyroglutamyl group from a polypeptide, the second amino acid generally not being Pro.. Functionally, removes 5-oxoproline from various penultimate amino acid residues except L-proline. In Erwinia tasmaniensis (strain DSM 17950 / CFBP 7177 / CIP 109463 / NCPPB 4357 / Et1/99), this protein is Pyrrolidone-carboxylate peptidase.